The following is a 320-amino-acid chain: Cytochrome c biogenesis protein CcsA (320 aa).

The next 7 helical transmembrane spans lie at 13-33 (ISFSVVSIVITIHFLTLFLLV), 46-66 (GMIVTFFCITGLLVTRWIYSG), 73-93 (LYESLIFLSWGFSLIHMVSYL), 147-167 (MVLGYAALLCGSLLSVALLVI), 226-246 (IISLGFIFLTIGILSGAVWAN), 259-274 (ETWAFITWTVFAIYFH), and 289-309 (VASMGFLIIWICYFGVNLLGI).

This sequence belongs to the CcmF/CycK/Ccl1/NrfE/CcsA family. As to quaternary structure, may interact with Ccs1.

It localises to the plastid. The protein localises to the chloroplast thylakoid membrane. Its function is as follows. Required during biogenesis of c-type cytochromes (cytochrome c6 and cytochrome f) at the step of heme attachment. This Gossypium barbadense (Sea Island cotton) protein is Cytochrome c biogenesis protein CcsA.